Here is a 183-residue protein sequence, read N- to C-terminus: Capsid protein (183 aa).

A disordered region spans residues 136–183 (NAPILSTLPETTVVRRRGRSPRRRTPSPRRRRSQSPRRRRTQSRESQC). Residues 149–176 (VRRRGRSPRRRTPSPRRRRSQSPRRRRT) are compositionally biased toward basic residues. 3 positions are modified to phosphoserine; by host: S155, S162, and S170. The 1; half-length repeat unit spans residues 155–161 (SPRRRTP). Residues 155 to 177 (SPRRRTPSPRRRRSQSPRRRRTQ) form a 3 X 8 AA repeats of S-P-R-R-R-[PR]-[ST]-Q region. A Bipartite nuclear localization signal motif is present at residues 158-175 (RRTPSPRRRRSQSPRRRR). 2 consecutive repeat copies span residues 162–169 (SPRRRRSQ) and 170–177 (SPRRRRTQ). The RNA binding stretch occupies residues 177 to 183 (QSRESQC).

The protein belongs to the orthohepadnavirus core antigen family. In terms of assembly, homodimerizes, then multimerizes. Interacts with cytosol exposed regions of viral L glycoprotein present in the reticulum-to-Golgi compartment. Interacts with human FLNB. Phosphorylated form interacts with host importin alpha; this interaction depends on the exposure of the NLS, which itself depends upon genome maturation and/or phosphorylation of the capsid protein. Interacts with host NUP153. In terms of processing, phosphorylated by host SRPK1, SRPK2, and maybe protein kinase C or GAPDH. Phosphorylation is critical for pregenomic RNA packaging. Protein kinase C phosphorylation is stimulated by HBx protein and may play a role in transport of the viral genome to the nucleus at the late step during the viral replication cycle.

The protein resides in the virion. It is found in the host cytoplasm. Functionally, self assembles to form an icosahedral capsid. Most capsids appear to be large particles with an icosahedral symmetry of T=4 and consist of 240 copies of capsid protein, though a fraction forms smaller T=3 particles consisting of 180 capsid proteins. Entering capsids are transported along microtubules to the nucleus. Phosphorylation of the capsid is thought to induce exposure of nuclear localization signal in the C-terminal portion of the capsid protein that allows binding to the nuclear pore complex via the importin (karyopherin-) alpha and beta. Capsids are imported in intact form through the nuclear pore into the nuclear basket, where it probably binds NUP153. Only capsids that contain the mature viral genome can release the viral DNA and capsid protein into the nucleoplasm. Immature capsids get stuck in the basket. Capsids encapsulate the pre-genomic RNA and the P protein. Pre-genomic RNA is reverse-transcribed into DNA while the capsid is still in the cytoplasm. The capsid can then either be directed to the nucleus, providing more genomes for transcription, or bud through the endoplasmic reticulum to provide new virions. This chain is Capsid protein, found in Hepatitis B virus genotype D (isolate France/alpha1/1989) (HBV-D).